The sequence spans 640 residues: Uromodulin (640 aa).

The N-terminal stretch at 1–24 is a signal peptide; it reads MGQPSLTWMLMVVVASWFITTAAT. One can recognise an EGF-like 1 domain in the interval 28-64; sequence EARWCSECHSNATCTEDEAVTTCTCQEGFTGDGLTCV. Cystine bridges form between C32–C41, C35–C50, C52–C63, C69–C83, C77–C92, C94–C106, C112–C126, C120–C135, C137–C148, C150–C161, C155–C170, C174–C267, C195–C282, C217–C255, C223–C287, C248–C256, C297–C306, C300–C315, C317–C347, C335–C425, and C366–C389. N-linked (GlcNAc...) asparagine glycosylation occurs at N38. The 43-residue stretch at 65–107 folds into the EGF-like 2; calcium-binding domain; the sequence is DLDECAIPGAHNCSANSSCVNTPGSFSCVCPEGFRLSPGLGCT. N76 and N80 each carry an N-linked (GlcNAc...) asparagine glycan. The 42-residue stretch at 108–149 folds into the EGF-like 3; calcium-binding domain; that stretch reads DVDECAEPGLSHCHALATCVNVVGSYLCVCPAGYRGDGWHCE. The tract at residues 150 to 171 is beta hairpin; sequence CSPGSCGPGLDCVPEGDALVCA. Positions 172–291 are D10C; it reads DPCQAHRTLD…CHLAYCTDPS (120 aa). Residue N232 is glycosylated (N-linked (GlcNAc...) (complex) asparagine). A glycan (N-linked (GlcNAc...) (high mannose) asparagine) is linked at N275. The 32-residue stretch at 292 to 323 folds into the EGF-like 4 domain; the sequence is SVEGTCEECSIDEDCKSNNGRWHCQCKQDFNI. An N-linked (GlcNAc...) (complex) asparagine glycan is attached at N322. The interval 334–429 is ZP-N; the sequence is ECGANDMKVS…KINFACSYPL (96 aa). In terms of domain architecture, ZP spans 334–589; that stretch reads ECGANDMKVS…PTCSGTRFRS (256 aa). N-linked (GlcNAc...) (complex) asparagine glycosylation occurs at N396. The interval 430–453 is flexible ZP-N/ZP-C linker; important for secretion and polymerization into filaments; that stretch reads DMKVSLKTALQPMVSALNIRVGGT. Positions 454–465 are internal hydrophobic patch (IHP); the sequence is GMFTVRMALFQT. The interval 454–589 is ZP-C; it reads GMFTVRMALF…PTCSGTRFRS (136 aa). Disulfide bonds link C506–C566, C527–C582, and C571–C578. Residue N513 is glycosylated (N-linked (GlcNAc...) (complex) asparagine; alternate). An N-linked (GlcNAc...) (high mannose) asparagine; alternate glycan is attached at N513. Residues 586 to 589 are essential for cleavage by HPN; the sequence is RFRS. Residues 598-606 are external hydrophobic patch (EHP); regulates polymerization into filaments; sequence VLNLGPITR. Residue S614 is the site of GPI-anchor amidated serine attachment. The propeptide at 615–640 is removed in mature form; it reads RAFSSLGLLKVWLPLLLSATLTLTFQ.

As to quaternary structure, homodimer that then polymerizes into long filaments. The filaments can additionally assemble laterally to form a sheet. The filaments consist of a zigzag-shaped backbone with laterally protruding arms which interact with bacterial adhesin fimH. Two fimH molecules can bind to a single UMOD monomer. N-glycosylated. N-glycan heterogeneity at Asn-232: Hex7HexNAc6 (major) and dHex1Hex7HexNAc6 (minor); at Asn-322: dHex1Hex6HexNAc5 (minor), dHex1Hex7HexNAc6 (major) and dHex1Hex8HexNAc7 (minor); at Asn-396: Hex6HexNAc5 (major), dHex1Hex6HexNAc5 (minor) and Hex7HexNAc6 (minor). Glycosylated Asn-232 interacts with E.coli adhesin fimH. Other complex glycosylation sites may serve as binding sites for proteins from other bacteria inclduding K.pneumoniae, P.aeruginosa and S.mitis. Post-translationally, proteolytically cleaved at a conserved C-terminal proteolytic cleavage site to generate the secreted form found in urine. This cleavage is catalyzed by HPN. In terms of tissue distribution, expressed in the tubular cells of the kidney. Most abundant protein in normal urine (at protein level). Synthesized exclusively in the kidney. Expressed exclusively by epithelial cells of the thick ascending limb of Henle's loop (TALH) and of distal convoluted tubule lumen.

It is found in the apical cell membrane. Its subcellular location is the basolateral cell membrane. The protein resides in the cell projection. The protein localises to the cilium membrane. It localises to the secreted. Functionally, functions in biogenesis and organization of the apical membrane of epithelial cells of the thick ascending limb of Henle's loop (TALH), where it promotes formation of complex filamentous gel-like structure that may play a role in the water barrier permeability. May serve as a receptor for binding and endocytosis of cytokines (IL-1, IL-2) and TNF. Facilitates neutrophil migration across renal epithelia. In terms of biological role, in the urine, may contribute to colloid osmotic pressure, retards passage of positively charged electrolytes, and inhibits formation of liquid containing supersaturated salts and subsequent formation of salt crystals. Protects against urinary tract infections by binding to type 1 fimbriated E.coli. Binds to bacterial adhesin fimH which mediates the stable formation of bacterial aggregates, prevents the binding of E.coli to uroplakins UPK1A and UPK1B which act as urothelial receptors for type I fimbriae, and allows for pathogen clearance through micturation. Also promotes aggregation of other bacteria including K.pneumoniae, P.aeruginosa and S.mitis and so may also protect against other uropathogens. This is Uromodulin (UMOD) from Homo sapiens (Human).